A 402-amino-acid chain; its full sequence is Caspase-1 (402 aa).

One can recognise a CARD domain in the interval M1–S91. Residues M1–Q118 constitute a propeptide that is removed on maturation. A disordered region spans residues F98 to F125. The segment covering E113 to G123 has biased composition (basic and acidic residues). Residues H236 and C284 contribute to the active site. A propeptide spanning residues S297–D314 is cleaved from the precursor. S301 carries the post-translational modification Phosphoserine. Residue R343 is modified to Omega-N-methylarginine.

The protein belongs to the peptidase C14A family. In terms of assembly, heterotetramer that consists of two anti-parallel arranged heterodimers, each one formed by a 20 kDa (Caspase-1 subunit p20) and a 10 kDa (Caspase-1 subunit p10) subunit. May be a component of the inflammasome, a protein complex which also includes PYCARD, CARD8 and NLRP2 and whose function would be the activation of pro-inflammatory caspases. Component of the AIM2 PANoptosome complex, a multiprotein complex that drives inflammatory cell death (PANoptosis). Both the p10 and p20 subunits interact with MEFV. Interacts with CARD17P/INCA and CARD18. Interacts with SERPINB1; this interaction regulates CASP1 activity. As to quaternary structure, heterotetramer that consists of two anti-parallel arranged heterodimers, each one formed by a 20 kDa (Caspase-1 subunit p20) and a 10 kDa (Caspase-1 subunit p10) subunit. The two subunits are derived from the precursor sequence by an autocatalytic mechanism. Post-translationally, ubiquitinated via 'Lys-11'-linked polyubiquitination. Deubiquitinated by USP8. As to expression, high level expression seen in spleen and lung, low level expression seen in brain, heart, liver, kidney, testis and skeletal muscle.

Its subcellular location is the cytoplasm. It is found in the cell membrane. It carries out the reaction Strict requirement for an Asp residue at position P1 and has a preferred cleavage sequence of Tyr-Val-Ala-Asp-|-.. Its function is as follows. Thiol protease involved in a variety of inflammatory processes by proteolytically cleaving other proteins, such as the precursors of the inflammatory cytokines interleukin-1 beta (IL1B) and interleukin 18 (IL18) as well as the pyroptosis inducer Gasdermin-D (GSDMD), into active mature peptides. Plays a key role in cell immunity as an inflammatory response initiator: once activated through formation of an inflammasome complex, it initiates a pro-inflammatory response through the cleavage of the two inflammatory cytokines IL1B and IL18, releasing the mature cytokines which are involved in a variety of inflammatory processes. Cleaves a tetrapeptide after an Asp residue at position P1. Also initiates pyroptosis, a programmed lytic cell death pathway, through cleavage of GSDMD. In contrast to cleavage of interleukin IL1B, recognition and cleavage of GSDMD is not strictly dependent on the consensus cleavage site but depends on an exosite interface on CASP1 that recognizes and binds the Gasdermin-D, C-terminal (GSDMD-CT) part. Cleaves and activates CASP7 in response to bacterial infection, promoting plasma membrane repair. Upon inflammasome activation, during DNA virus infection but not RNA virus challenge, controls antiviral immunity through the cleavage of CGAS, rendering it inactive. In apoptotic cells, cleaves SPHK2 which is released from cells and remains enzymatically active extracellularly. This chain is Caspase-1 (Casp1), found in Mus musculus (Mouse).